A 417-amino-acid chain; its full sequence is Serine hydroxymethyltransferase 1 (417 aa).

(6S)-5,6,7,8-tetrahydrofolate-binding positions include Leu121 and 125-127; that span reads GHL. Position 229 is an N6-(pyridoxal phosphate)lysine (Lys229). 354–356 lines the (6S)-5,6,7,8-tetrahydrofolate pocket; sequence SPF.

This sequence belongs to the SHMT family. In terms of assembly, homodimer. Pyridoxal 5'-phosphate serves as cofactor.

The protein localises to the cytoplasm. It catalyses the reaction (6R)-5,10-methylene-5,6,7,8-tetrahydrofolate + glycine + H2O = (6S)-5,6,7,8-tetrahydrofolate + L-serine. It functions in the pathway one-carbon metabolism; tetrahydrofolate interconversion. The protein operates within amino-acid biosynthesis; glycine biosynthesis; glycine from L-serine: step 1/1. Its function is as follows. Catalyzes the reversible interconversion of serine and glycine with tetrahydrofolate (THF) serving as the one-carbon carrier. This reaction serves as the major source of one-carbon groups required for the biosynthesis of purines, thymidylate, methionine, and other important biomolecules. Also exhibits THF-independent aldolase activity toward beta-hydroxyamino acids, producing glycine and aldehydes, via a retro-aldol mechanism. The sequence is that of Serine hydroxymethyltransferase 1 from Pseudomonas fluorescens (strain ATCC BAA-477 / NRRL B-23932 / Pf-5).